A 195-amino-acid chain; its full sequence is ATP-dependent Clp protease proteolytic subunit (195 aa).

S98 (nucleophile) is an active-site residue. Residue H123 is part of the active site.

Belongs to the peptidase S14 family. Fourteen ClpP subunits assemble into 2 heptameric rings which stack back to back to give a disk-like structure with a central cavity, resembling the structure of eukaryotic proteasomes.

Its subcellular location is the cytoplasm. It carries out the reaction Hydrolysis of proteins to small peptides in the presence of ATP and magnesium. alpha-casein is the usual test substrate. In the absence of ATP, only oligopeptides shorter than five residues are hydrolyzed (such as succinyl-Leu-Tyr-|-NHMec, and Leu-Tyr-Leu-|-Tyr-Trp, in which cleavage of the -Tyr-|-Leu- and -Tyr-|-Trp bonds also occurs).. Functionally, cleaves peptides in various proteins in a process that requires ATP hydrolysis. Has a chymotrypsin-like activity. Plays a major role in the degradation of misfolded proteins. The chain is ATP-dependent Clp protease proteolytic subunit from Alkaliphilus oremlandii (strain OhILAs) (Clostridium oremlandii (strain OhILAs)).